We begin with the raw amino-acid sequence, 110 residues long: Cell division protein FtsB (110 aa).

Topologically, residues 1 to 3 (MRL) are cytoplasmic. The helical transmembrane segment at 4–21 (IILCLAALVLLIQFPLWL) threads the bilayer. The Periplasmic segment spans residues 22–110 (GKGGWLRVWD…PPKIEPKEKR (89 aa)). Positions 31 to 64 (DLDQQVIAAQKKNDELRARNAKLNSEVQDLKEGT) form a coiled coil.

It belongs to the FtsB family. In terms of assembly, part of a complex composed of FtsB, FtsL and FtsQ.

It is found in the cell inner membrane. Functionally, essential cell division protein. May link together the upstream cell division proteins, which are predominantly cytoplasmic, with the downstream cell division proteins, which are predominantly periplasmic. The protein is Cell division protein FtsB of Herminiimonas arsenicoxydans.